A 524-amino-acid chain; its full sequence is Zinc finger CCCH domain-containing protein 37 (524 aa).

The disordered stretch occupies residues 19–39; sequence ASTVSPAPPPPQQPLPPKTGL. Residues 24-35 show a composition bias toward pro residues; the sequence is PAPPPPQQPLPP. C3H1-type zinc fingers lie at residues 174–202, 225–253, and 268–296; these read RAGEKDCTHYMQTRTCKFGESCRFDHPIW, RPGEPDCPYYIKTQRCKYGSKCKFNHPRE, and RPSEPMCTFYMKTGKCKFGLSCKFHHPKD. A disordered region spans residues 300 to 319; sequence PSSSQDIGSSVGLTSEPDAT. 3 C3H1-type zinc fingers span residues 340–368, 420–448, and 473–501; these read RSGEVDCPFYLKTGSCKYGATCRYNHPER, RPGQSECDYYMKTGECKFGERCKFHHPAD, and REGALNCPYYMKTGTCKYGATCKFDHPPP. The segment at 505–524 is disordered; sequence MAKTTSEADAAGATNTDTTQ. The segment covering 512–524 has biased composition (low complexity); sequence ADAAGATNTDTTQ.

Interacts with HEN4. Interacts with FLK and PEP. As to expression, highly expressed in inflorescences, at intermediate levels in leaves and stems and at lower levels in roots.

The protein resides in the nucleus speckle. Functionally, involved in flower development. Functions in floral reproductive organ identity by binding AGAMOUS (AG) pre-mRNA and promoting its processing. Functions in association with HUA2 and HEN4. This is Zinc finger CCCH domain-containing protein 37 (HUA1) from Arabidopsis thaliana (Mouse-ear cress).